A 195-amino-acid polypeptide reads, in one-letter code: Xanthine phosphoribosyltransferase (195 aa).

Residues Leu20 and Asn27 each contribute to the xanthine site. 128 to 132 is a 5-phospho-alpha-D-ribose 1-diphosphate binding site; sequence ANGQA. Lys156 is a binding site for xanthine.

It belongs to the purine/pyrimidine phosphoribosyltransferase family. Xpt subfamily. In terms of assembly, homodimer.

It localises to the cytoplasm. The catalysed reaction is XMP + diphosphate = xanthine + 5-phospho-alpha-D-ribose 1-diphosphate. It participates in purine metabolism; XMP biosynthesis via salvage pathway; XMP from xanthine: step 1/1. In terms of biological role, converts the preformed base xanthine, a product of nucleic acid breakdown, to xanthosine 5'-monophosphate (XMP), so it can be reused for RNA or DNA synthesis. The chain is Xanthine phosphoribosyltransferase from Latilactobacillus sakei subsp. sakei (strain 23K) (Lactobacillus sakei subsp. sakei).